We begin with the raw amino-acid sequence, 341 residues long: Biotin synthase (341 aa).

Positions 53 to 272 (NHVETASLLS…IAVARIMMPK (220 aa)) constitute a Radical SAM core domain. The [4Fe-4S] cluster site is built by Cys-68, Cys-72, and Cys-75. Positions 112, 143, 203, and 276 each coordinate [2Fe-2S] cluster.

Belongs to the radical SAM superfamily. Biotin synthase family. Homodimer. Requires [4Fe-4S] cluster as cofactor. [2Fe-2S] cluster is required as a cofactor.

The enzyme catalyses (4R,5S)-dethiobiotin + (sulfur carrier)-SH + 2 reduced [2Fe-2S]-[ferredoxin] + 2 S-adenosyl-L-methionine = (sulfur carrier)-H + biotin + 2 5'-deoxyadenosine + 2 L-methionine + 2 oxidized [2Fe-2S]-[ferredoxin]. The protein operates within cofactor biosynthesis; biotin biosynthesis; biotin from 7,8-diaminononanoate: step 2/2. Functionally, catalyzes the conversion of dethiobiotin (DTB) to biotin by the insertion of a sulfur atom into dethiobiotin via a radical-based mechanism. The polypeptide is Biotin synthase (Nitrobacter winogradskyi (strain ATCC 25391 / DSM 10237 / CIP 104748 / NCIMB 11846 / Nb-255)).